Here is a 364-residue protein sequence, read N- to C-terminus: Fructose-bisphosphate aldolase A (364 aa).

Y5 bears the Phosphotyrosine mark. T9 carries the phosphothreonine modification. Phosphoserine is present on residues S36 and S39. Position 42 is an N6-acetyllysine; alternate (K42). K42 is covalently cross-linked (Glycyl lysine isopeptide (Lys-Gly) (interchain with G-Cter in SUMO1); alternate). A Glycyl lysine isopeptide (Lys-Gly) (interchain with G-Cter in SUMO2); alternate cross-link involves residue K42. Residue R43 participates in beta-D-fructose 1,6-bisphosphate binding. S46 is subject to Phosphoserine. At K99 the chain carries N6-(2-hydroxyisobutyryl)lysine. K108 carries the post-translational modification N6-acetyllysine. An N6-acetyllysine; alternate modification is found at K111. Position 111 is an N6-malonyllysine; alternate (K111). S132 is subject to Phosphoserine. K147 carries the post-translational modification N6-(2-hydroxyisobutyryl)lysine. The active-site Proton acceptor is E188. Residue K230 is the Schiff-base intermediate with dihydroxyacetone-P of the active site. S272 carries the post-translational modification Phosphoserine. Residues 272–274 (SGG), S301, and R304 each bind beta-D-fructose 1,6-bisphosphate. K312 is subject to N6-malonyllysine. K330 carries the N6-acetyllysine modification.

This sequence belongs to the class I fructose-bisphosphate aldolase family. In terms of assembly, homotetramer. Interacts with SNX9 and WAS. Interacts with FBP2; the interaction blocks FBP2 inhibition by physiological concentrations of AMP and reduces inhibition by Ca(2+). As to expression, expressed in muscle, brain and hepatoma cells.

The protein localises to the cytoplasm. Its subcellular location is the myofibril. The protein resides in the sarcomere. It localises to the i band. It is found in the m line. It catalyses the reaction beta-D-fructose 1,6-bisphosphate = D-glyceraldehyde 3-phosphate + dihydroxyacetone phosphate. It participates in carbohydrate degradation; glycolysis; D-glyceraldehyde 3-phosphate and glycerone phosphate from D-glucose: step 4/4. In terms of biological role, catalyzes the reversible conversion of beta-D-fructose 1,6-bisphosphate (FBP) into two triose phosphate and plays a key role in glycolysis and gluconeogenesis. In addition, may also function as scaffolding protein. This chain is Fructose-bisphosphate aldolase A (Aldoa), found in Rattus norvegicus (Rat).